We begin with the raw amino-acid sequence, 352 residues long: Mannonate dehydratase (352 aa).

It belongs to the mannonate dehydratase family. It depends on Fe(2+) as a cofactor. Requires Mn(2+) as cofactor.

The catalysed reaction is D-mannonate = 2-dehydro-3-deoxy-D-gluconate + H2O. It functions in the pathway carbohydrate metabolism; pentose and glucuronate interconversion. Its function is as follows. Catalyzes the dehydration of D-mannonate. The polypeptide is Mannonate dehydratase (Paraburkholderia phytofirmans (strain DSM 17436 / LMG 22146 / PsJN) (Burkholderia phytofirmans)).